Here is a 402-residue protein sequence, read N- to C-terminus: Zinc finger protein 809 (402 aa).

The KRAB domain occupies 4–75; the sequence is VSFEDVAVDF…AEASSRSLPG (72 aa). A disordered region spans residues 118–139; that stretch reads QEVSKGTTSRHRRAPVKSLCRK. The segment covering 125–139 has biased composition (basic residues); the sequence is TSRHRRAPVKSLCRK. 7 C2H2-type zinc fingers span residues 155–178, 184–206, 213–235, 241–263, 269–291, 297–319, and 325–347; these read YECK…RRTH, YECD…QKTH, YECS…ERTH, YECT…KKTH, FKCE…QKKH, YECT…RIAH, and YECK…QKRH.

Belongs to the krueppel C2H2-type zinc-finger protein family.

Its subcellular location is the nucleus. In terms of biological role, transcription factor specifically required to repress retrotransposons in embryonic stem cells. Recognizes and binds retroviral DNA sequences from a large subset of mammalian retroviruses and retroelements and repress their expression by recruiting a repressive complex containing TRIM28/KAP1. This Mus musculus (Mouse) protein is Zinc finger protein 809.